Here is a 228-residue protein sequence, read N- to C-terminus: Small ribosomal subunit protein uS3 (228 aa).

The KH type-2 domain occupies 39–107; the sequence is VREYLQDKLK…PVHINIEEIR (69 aa).

This sequence belongs to the universal ribosomal protein uS3 family. Part of the 30S ribosomal subunit. Forms a tight complex with proteins S10 and S14.

Binds the lower part of the 30S subunit head. Binds mRNA in the 70S ribosome, positioning it for translation. The sequence is that of Small ribosomal subunit protein uS3 from Pseudomonas syringae pv. syringae (strain B728a).